The following is a 291-amino-acid chain: HTH-type transcriptional activator AmpR (291 aa).

The HTH lysR-type domain maps to L6 to T63. Residues F23–K42 constitute a DNA-binding region (H-T-H motif).

Belongs to the LysR transcriptional regulatory family.

The protein resides in the cytoplasm. This protein is a positive regulator of gene expression of cephalosporinase (AmpC). The chain is HTH-type transcriptional activator AmpR (ampR) from Enterobacter cloacae.